The sequence spans 429 residues: Mannose-6-phosphate isomerase (429 aa).

Ser-2 carries the post-translational modification N-acetylserine. Ser-107 is subject to Phosphoserine. Gln-109, His-111, Glu-136, and His-281 together coordinate Zn(2+). Arg-300 is an active-site residue.

It belongs to the mannose-6-phosphate isomerase type 1 family. As to quaternary structure, monomer. Zn(2+) is required as a cofactor.

It is found in the cytoplasm. It catalyses the reaction D-mannose 6-phosphate = D-fructose 6-phosphate. The protein operates within nucleotide-sugar biosynthesis; GDP-alpha-D-mannose biosynthesis; alpha-D-mannose 1-phosphate from D-fructose 6-phosphate: step 1/2. Can be inhibited by an excess of zinc. Functionally, involved in the synthesis of the GDP-mannose and dolichol-phosphate-mannose required for a number of critical mannosyl transfer reactions. This chain is Mannose-6-phosphate isomerase (PMI40), found in Saccharomyces cerevisiae (strain ATCC 204508 / S288c) (Baker's yeast).